Reading from the N-terminus, the 285-residue chain is Ribosomal RNA small subunit methyltransferase H (285 aa).

S-adenosyl-L-methionine is bound by residues Ala34–His36, Asp51, Phe75, Asp96, and His103. Residues Pro258 to Pro285 form a disordered region.

It belongs to the methyltransferase superfamily. RsmH family.

It localises to the cytoplasm. The enzyme catalyses cytidine(1402) in 16S rRNA + S-adenosyl-L-methionine = N(4)-methylcytidine(1402) in 16S rRNA + S-adenosyl-L-homocysteine + H(+). In terms of biological role, specifically methylates the N4 position of cytidine in position 1402 (C1402) of 16S rRNA. The chain is Ribosomal RNA small subunit methyltransferase H from Thermus thermophilus (strain ATCC BAA-163 / DSM 7039 / HB27).